We begin with the raw amino-acid sequence, 83 residues long: Sec-independent protein translocase protein TatA (83 aa).

A helical transmembrane segment spans residues 1 to 21; that stretch reads MGSFSIWHWLIVLLIVVMVFG. A disordered region spans residues 44–83; that stretch reads KDGGQSAAATDDKPAAPAGQVTNAQASDKTTIDVEARQKS. Polar residues predominate over residues 63–72; the sequence is QVTNAQASDK. The segment covering 73 to 83 has biased composition (basic and acidic residues); that stretch reads TTIDVEARQKS.

It belongs to the TatA/E family. In terms of assembly, the Tat system comprises two distinct complexes: a TatABC complex, containing multiple copies of TatA, TatB and TatC subunits, and a separate TatA complex, containing only TatA subunits. Substrates initially bind to the TatABC complex, which probably triggers association of the separate TatA complex to form the active translocon.

It localises to the cell inner membrane. Its function is as follows. Part of the twin-arginine translocation (Tat) system that transports large folded proteins containing a characteristic twin-arginine motif in their signal peptide across membranes. TatA could form the protein-conducting channel of the Tat system. This is Sec-independent protein translocase protein TatA from Polaromonas sp. (strain JS666 / ATCC BAA-500).